We begin with the raw amino-acid sequence, 499 residues long: Lysine--tRNA ligase (499 aa).

Glu-408 and Glu-415 together coordinate Mg(2+).

This sequence belongs to the class-II aminoacyl-tRNA synthetase family. In terms of assembly, homodimer. Mg(2+) is required as a cofactor.

It is found in the cytoplasm. The enzyme catalyses tRNA(Lys) + L-lysine + ATP = L-lysyl-tRNA(Lys) + AMP + diphosphate. This chain is Lysine--tRNA ligase, found in Bacillus cytotoxicus (strain DSM 22905 / CIP 110041 / 391-98 / NVH 391-98).